The chain runs to 98 residues: Large ribosomal subunit protein uL23 (98 aa).

The protein belongs to the universal ribosomal protein uL23 family. In terms of assembly, part of the 50S ribosomal subunit. Contacts protein L29, and trigger factor when it is bound to the ribosome.

One of the early assembly proteins it binds 23S rRNA. One of the proteins that surrounds the polypeptide exit tunnel on the outside of the ribosome. Forms the main docking site for trigger factor binding to the ribosome. The chain is Large ribosomal subunit protein uL23 from Jannaschia sp. (strain CCS1).